Reading from the N-terminus, the 239-residue chain is Peroxygenase (239 aa).

Glycine 2 carries the N-acetylglycine modification. The EF-hand domain maps to 60-95 (HNMSVLQQRAAFFDRNNDGIVYPWETYQGFRAVGFG). Ca(2+) contacts are provided by aspartate 73, asparagine 75, aspartate 77, and glutamate 84. The Proline-knot signature appears at 116 to 125 (PSWIPSPVLS).

Belongs to the caleosin family. Homodimer. The cofactor is heme b. Requires Ca(2+) as cofactor. Expressed in pollen (at protein level). Not expressed in leaf, root, stem, tepal, ovary, style, filament or stigma (at protein level).

Its subcellular location is the lipid droplet. It localises to the microsome membrane. It catalyses the reaction RH + ROOH = ROH + ROH.. Calcium-binding peroxygenase involved in the degradation of storage lipid in oil bodies. This chain is Peroxygenase, found in Lilium longiflorum (Trumpet lily).